Consider the following 239-residue polypeptide: Probable transcriptional regulatory protein lmo0369 (239 aa).

This sequence belongs to the TACO1 family. YeeN subfamily.

It localises to the cytoplasm. The protein is Probable transcriptional regulatory protein lmo0369 of Listeria monocytogenes serovar 1/2a (strain ATCC BAA-679 / EGD-e).